Here is a 101-residue protein sequence, read N- to C-terminus: Feather keratin Cos2-2 (101 aa).

Ser-2 is modified (N-acetylserine).

Belongs to the avian keratin family. In terms of assembly, the avian keratins (F-ker, S-ker, C-ker and B-ker) are a complex mixture of very similar polypeptides.

The chain is Feather keratin Cos2-2 from Columba livia (Rock dove).